The following is a 58-amino-acid chain: Small ribosomal subunit protein bS21 (58 aa).

The protein belongs to the bacterial ribosomal protein bS21 family.

This chain is Small ribosomal subunit protein bS21, found in Picosynechococcus sp. (strain ATCC 27264 / PCC 7002 / PR-6) (Agmenellum quadruplicatum).